Consider the following 177-residue polypeptide: Interleukin-1 receptor antagonist protein (177 aa).

The signal sequence occupies residues 1–25 (MEVSRYLCSYLISFLLFLFHSETAC). A disulfide bond links Cys-91 and Cys-141. Asn-109 carries an N-linked (GlcNAc...) asparagine glycan.

It belongs to the IL-1 family.

It is found in the secreted. Functionally, anti-inflammatory antagonist of interleukin-1 family of proinflammatory cytokines such as interleukin-1beta/IL1B and interleukin-1alpha/IL1A. Protects from immune dysregulation and uncontrolled systemic inflammation triggered by IL1 for a range of innate stimulatory agents such as pathogens. In Sus scrofa (Pig), this protein is Interleukin-1 receptor antagonist protein (IL1RN).